A 193-amino-acid chain; its full sequence is dTTP/UTP pyrophosphatase (193 aa).

Residue Asp-77 is the Proton acceptor of the active site.

This sequence belongs to the Maf family. YhdE subfamily. A divalent metal cation is required as a cofactor.

The protein localises to the cytoplasm. The catalysed reaction is dTTP + H2O = dTMP + diphosphate + H(+). It catalyses the reaction UTP + H2O = UMP + diphosphate + H(+). Functionally, nucleoside triphosphate pyrophosphatase that hydrolyzes dTTP and UTP. May have a dual role in cell division arrest and in preventing the incorporation of modified nucleotides into cellular nucleic acids. This chain is dTTP/UTP pyrophosphatase, found in Bacteroides thetaiotaomicron (strain ATCC 29148 / DSM 2079 / JCM 5827 / CCUG 10774 / NCTC 10582 / VPI-5482 / E50).